The following is a 453-amino-acid chain: Chromosomal replication initiator protein DnaA (453 aa).

Residues 1 to 71 (MSEKEIWEKV…QAILFDVVGY (71 aa)) are domain I, interacts with DnaA modulators. Residues 71 to 114 (YEVKPHFITTEELANYSNNETATPKETTKPSTETTEDNHVLGRE) are domain II. The interval 115–331 (QFNAHNTFDT…GALTRLLAYS (217 aa)) is domain III, AAA+ region. Residues glycine 159, glycine 161, lysine 162, and threonine 163 each coordinate ATP. The tract at residues 332–453 (QLLGKPITTE…ENLEKEIRNV (122 aa)) is domain IV, binds dsDNA.

It belongs to the DnaA family. As to quaternary structure, oligomerizes as a right-handed, spiral filament on DNA at oriC.

Its subcellular location is the cytoplasm. Functionally, plays an essential role in the initiation and regulation of chromosomal replication. ATP-DnaA binds to the origin of replication (oriC) to initiate formation of the DNA replication initiation complex once per cell cycle. Binds the DnaA box (a 9 base pair repeat at the origin) and separates the double-stranded (ds)DNA. Forms a right-handed helical filament on oriC DNA; dsDNA binds to the exterior of the filament while single-stranded (ss)DNA is stabiized in the filament's interior. The ATP-DnaA-oriC complex binds and stabilizes one strand of the AT-rich DNA unwinding element (DUE), permitting loading of DNA polymerase. After initiation quickly degrades to an ADP-DnaA complex that is not apt for DNA replication. Binds acidic phospholipids. This Staphylococcus aureus (strain Mu3 / ATCC 700698) protein is Chromosomal replication initiator protein DnaA.